A 2715-amino-acid polypeptide reads, in one-letter code: Chromodomain-helicase-DNA-binding protein 6 (2715 aa).

Positions 1–11 (MKMKIQKKEKQ) are enriched in basic and acidic residues. Disordered regions lie at residues 1 to 30 (MKMK…SVNF) and 66 to 244 (EEAA…QVKR). A required for DNA-dependent ATPase activity region spans residues 1–747 (MKMKIQKKEK…MMELRKCCNH (747 aa)). Over residues 12–27 (LSNLKVLNHSPMSDAS) the composition is skewed to polar residues. Over residues 123–172 (EPKEPKEPRKAKEPKKAKEHKEPKQKDGAKKARKPREASGTKEAKEKRSC) the composition is skewed to basic and acidic residues. 2 Chromo domains span residues 292–343 (NIIE…KDPR) and 375–439 (VEVD…KHVE). The Helicase ATP-binding domain maps to 473 to 647 (LFNWYNRKNC…FSLLNFLEPS (175 aa)). An ATP-binding site is contributed by 486–493 (DEMGLGKT). The DEAH box signature appears at 598–601 (DEAH). The region spanning 787–956 (LIDKLLPKLI…LSKMEVEDLL (170 aa)) is the Helicase C-terminal domain. The segment at 1318–1390 (KSLSAEQGVT…SDPDKSPWPV (73 aa)) is disordered. Positions 1321 to 1330 (SAEQGVTDGT) are enriched in polar residues. Composition is skewed to basic and acidic residues over residues 1333–1351 (IPER…KVDG) and 1367–1376 (FSEKKDDSRA). Residues 1449–1503 (RWTRREQADFYRTVSSFGVVYDQEKKTFDWTQFRIISRLDKKSDESLEQYFYSFV) form the Myb-like domain. The segment covering 2027–2038 (FENKDDYDRDGN) has biased composition (basic and acidic residues). Disordered stretches follow at residues 2027–2063 (FENK…ITGD), 2116–2148 (SQQY…AAEH), 2321–2351 (QATL…QAEK), 2373–2422 (PGFG…FLPE), 2547–2602 (TSTA…PAIT), and 2648–2715 (VGLE…NDTN). The segment covering 2116-2141 (SQQYEPSGTLPTPVLTSSAGSRTSLS) has biased composition (polar residues). Residues 2329–2346 (PEGPGPATSAPEPATAAS) show a composition bias toward low complexity. Positions 2547–2560 (TSTAPASLSSTTKS) are enriched in low complexity. Composition is skewed to basic and acidic residues over residues 2567 to 2588 (KTAE…EDKP) and 2706 to 2715 (ALKDSNNDTN).

Belongs to the SNF2/RAD54 helicase family. In terms of assembly, interacts with NFE2L2; involved in activation of the transcription. As to quaternary structure, (Microbial infection) Interacts with the influenza A polymerase complex composed fo PB1, PB2 and PA. (Microbial infection) Interacts (via N-terminus) with human papillomavirus protein E8^E2C (via C-terminus); this interaction induces transcriptional repression of the viral genome. As to expression, widely expressed.

It is found in the nucleus. The protein resides in the nucleoplasm. The enzyme catalyses ATP + H2O = ADP + phosphate + H(+). Functionally, ATP-dependent chromatin-remodeling factor. Regulates transcription by disrupting nucleosomes in a largely non-sliding manner which strongly increases the accessibility of chromatin; nucleosome disruption requires ATP. Activates transcription of specific genes in response to oxidative stress through interaction with NFE2L2. (Microbial infection) Acts as a transcriptional repressor of different viruses including influenza virus or papillomavirus. During influenza virus infection, the viral polymerase complex localizes CHD6 to inactive chromatin where it gets degraded in a proteasome independent-manner. In Homo sapiens (Human), this protein is Chromodomain-helicase-DNA-binding protein 6 (CHD6).